We begin with the raw amino-acid sequence, 117 residues long: Ribonuclease P protein component (117 aa).

Belongs to the RnpA family. Consists of a catalytic RNA component (M1 or rnpB) and a protein subunit.

It catalyses the reaction Endonucleolytic cleavage of RNA, removing 5'-extranucleotides from tRNA precursor.. RNaseP catalyzes the removal of the 5'-leader sequence from pre-tRNA to produce the mature 5'-terminus. It can also cleave other RNA substrates such as 4.5S RNA. The protein component plays an auxiliary but essential role in vivo by binding to the 5'-leader sequence and broadening the substrate specificity of the ribozyme. The sequence is that of Ribonuclease P protein component from Lactococcus lactis subsp. lactis (strain IL1403) (Streptococcus lactis).